Here is a 528-residue protein sequence, read N- to C-terminus: G protein-coupled receptor 161 (528 aa).

Topologically, residues 1–30 (MSLNSSLGHRKELSNLTEGASDQGGSGVTE) are extracellular. N-linked (GlcNAc...) asparagine glycosylation is found at asparagine 4 and asparagine 15. A helical transmembrane segment spans residues 31-51 (FVAIVIITVFVCLGNLVIVIT). Over 52–64 (LYRKSYLLTLSNK) the chain is Cytoplasmic. A helical transmembrane segment spans residues 65 to 85 (FVFSLTLSNFLLSVLVLPFVV). The Extracellular segment spans residues 86 to 101 (TSSIRREWIFGVVWCN). Residues cysteine 100 and cysteine 178 are joined by a disulfide bond. The N-linked (GlcNAc...) asparagine glycan is linked to asparagine 101. The chain crosses the membrane as a helical span at residues 102-122 (FSALLYLLISSASMLTLGIIA). Over 123 to 143 (VDRYYAVLYPMAYPMKITGNR) the chain is Cytoplasmic. Residues 144–164 (AVMVLAYIWLHSLIGCLPPLF) form a helical membrane-spanning segment. Topologically, residues 165–190 (GWSSVEFDEFKWMCVAAWHREPGYTA) are extracellular. A helical transmembrane segment spans residues 191–211 (FWQIWCALLPFLVMLVCYGFI). Topologically, residues 212–269 (FRVARVKARKVHCGAVVTVEVGVQRTGRKNSSTSTSSSGSRKSAFQGVVYSANQCKAL) are cytoplasmic. Residues 270–290 (VTILVVIGAFMVTWGPYMVVI) traverse the membrane as a helical segment. At 291-306 (TSEALWGKNCVSPTLE) the chain is on the extracellular side. A helical membrane pass occupies residues 307 to 327 (TWATWLSFTSAICHPLIYGLW). Over 328-528 (NKTVRKELLG…EGDVLATEQR (201 aa)) the chain is Cytoplasmic.

It belongs to the G-protein coupled receptor 1 family.

It localises to the cell projection. It is found in the cilium membrane. The protein resides in the cell membrane. Its function is as follows. Key negative regulator of Shh signaling, which promotes the processing of GLI3 into GLI3R during neural tube development. Recruited by TULP3 and the IFT-A complex to primary cilia and acts as a regulator of the PKA-dependent basal repression machinery in Shh signaling by increasing cAMP levels, leading to promote the PKA-dependent processing of GLI3 into GLI3R and repress the Shh signaling. In presence of SHH, it is removed from primary cilia and is internalized into recycling endosomes, preventing its activity and allowing activation of the Shh signaling. Its ligand is unknown. This chain is G protein-coupled receptor 161 (GPR161), found in Bos taurus (Bovine).